A 457-amino-acid chain; its full sequence is PE-PGRS family protein PE_PGRS18 (457 aa).

The PE domain maps to 1–92; sequence MSFVNVAPQL…SSTYAVAEAA (92 aa). NHL repeat units follow at residues 291–321, 333–363, 379–404, and 419–447; these read FNDP…IDPV, NGPS…IDPN, GVAV…IDPA, and PTGV…ITGE.

It belongs to the mycobacterial PE family. PGRS subfamily.

The protein resides in the secreted. The protein localises to the cell wall. Enhances mycobacterial intracellular survival, probably via altering host macrophage cytokine profiling and attenuating the cell apoptosis. Could be required for host endothelial-cell invasion. Functionally, expression in Mycobacterium smegmatis, a nonpathogenic species naturally deficient in PE_PGRS genes, results in alteration of the production of host cytokines, including IL-6, IL-1beta, IL-10 and IL-12p40, as well as enhanced survival within macrophages largely via attenuating the apoptosis of macrophages. The chain is PE-PGRS family protein PE_PGRS18 from Mycobacterium tuberculosis (strain ATCC 25618 / H37Rv).